Reading from the N-terminus, the 442-residue chain is tRNA modification GTPase MnmE (442 aa).

R27, E84, and K124 together coordinate (6S)-5-formyl-5,6,7,8-tetrahydrofolate. One can recognise a TrmE-type G domain in the interval 221–366; the sequence is GLHVVIVGAP…LLDALQAFAE (146 aa). GTP contacts are provided by residues 231–236, 250–256, and 275–278; these read NAGKSS, SEEAGTT, and DTAG. Residues S235 and T256 each contribute to the Mg(2+) site. K442 contributes to the (6S)-5-formyl-5,6,7,8-tetrahydrofolate binding site.

This sequence belongs to the TRAFAC class TrmE-Era-EngA-EngB-Septin-like GTPase superfamily. TrmE GTPase family. In terms of assembly, homodimer. Heterotetramer of two MnmE and two MnmG subunits. Requires K(+) as cofactor.

It localises to the cytoplasm. Its function is as follows. Exhibits a very high intrinsic GTPase hydrolysis rate. Involved in the addition of a carboxymethylaminomethyl (cmnm) group at the wobble position (U34) of certain tRNAs, forming tRNA-cmnm(5)s(2)U34. This is tRNA modification GTPase MnmE from Brucella abortus (strain 2308).